A 180-amino-acid polypeptide reads, in one-letter code: Dynactin subunit 6 (180 aa).

Belongs to the dynactin subunits 5/6 family. Dynactin subunit 6 subfamily. Subunit of dynactin, a multiprotein complex part of a tripartite complex with dynein and a adapter, such as BICDL1, BICD2 or HOOK3. The dynactin complex is built around ACTR1A/ACTB filament and consists of an actin-related filament composed of a shoulder domain, a pointed end and a barbed end.

Its subcellular location is the cytoplasm. It is found in the cytoskeleton. Functionally, part of the dynactin complex that activates the molecular motor dynein for ultra-processive transport along microtubules. In Caenorhabditis elegans, this protein is Dynactin subunit 6 (dnc-6).